A 133-amino-acid chain; its full sequence is Protein Wnt-4 (133 aa).

S1 carries the O-palmitoleoyl serine; by PORCN lipid modification. 2 cysteine pairs are disulfide-bonded: C69/C114 and C99/C109. N100 is a glycosylation site (N-linked (GlcNAc...) asparagine).

Belongs to the Wnt family. Palmitoleoylation is required for efficient binding to frizzled receptors. Depalmitoleoylation leads to Wnt signaling pathway inhibition.

Its subcellular location is the secreted. It is found in the extracellular space. It localises to the extracellular matrix. Its function is as follows. Ligand for members of the frizzled family of seven transmembrane receptors. Plays an important role in embryonic development. The chain is Protein Wnt-4 (WNT-4) from Strongylocentrotus purpuratus (Purple sea urchin).